The sequence spans 273 residues: MLILKTVKQLQEFVASAGDEIGFVPTMGALHDGHMSLIKKCVSENAVSIVSTFVNPTQFLPGEDLEKYPKKEESDIKICELCGVSAMFIPDAKEMYFDDEPCIIAPKKYSSILEGKSRPGHFDGVLRVLVKLFNLTRAKRVYMGKKDAQQLVIVQNMVKTLFLNLQVVPCEIVRESDGLALSSRNAYLSEEDKCNALRLSRALINASNLIKGGELDTSEIKTGMLKTLEPLTVDYVAIVDRDFNQISKVELGNTIILVAANVGKTRLIDNIWV.

Residue 27 to 34 (MGALHDGH) coordinates ATP. His-34 (proton donor) is an active-site residue. Gln-58 is a (R)-pantoate binding site. Gln-58 is a binding site for beta-alanine. Residue 144-147 (GKKD) coordinates ATP. Gln-150 is a (R)-pantoate binding site. Residues Val-173 and 181–184 (LSSR) contribute to the ATP site.

Belongs to the pantothenate synthetase family. In terms of assembly, homodimer.

Its subcellular location is the cytoplasm. The enzyme catalyses (R)-pantoate + beta-alanine + ATP = (R)-pantothenate + AMP + diphosphate + H(+). It participates in cofactor biosynthesis; (R)-pantothenate biosynthesis; (R)-pantothenate from (R)-pantoate and beta-alanine: step 1/1. Catalyzes the condensation of pantoate with beta-alanine in an ATP-dependent reaction via a pantoyl-adenylate intermediate. This Campylobacter curvus (strain 525.92) protein is Pantothenate synthetase.